Consider the following 376-residue polypeptide: Lipid-A-disaccharide synthase (376 aa).

The protein belongs to the LpxB family.

It carries out the reaction a lipid X + a UDP-2-N,3-O-bis[(3R)-3-hydroxyacyl]-alpha-D-glucosamine = a lipid A disaccharide + UDP + H(+). It participates in bacterial outer membrane biogenesis; LPS lipid A biosynthesis. Functionally, condensation of UDP-2,3-diacylglucosamine and 2,3-diacylglucosamine-1-phosphate to form lipid A disaccharide, a precursor of lipid A, a phosphorylated glycolipid that anchors the lipopolysaccharide to the outer membrane of the cell. This is Lipid-A-disaccharide synthase from Coxiella burnetii (strain CbuG_Q212) (Coxiella burnetii (strain Q212)).